Consider the following 190-residue polypeptide: Peptidyl-tRNA hydrolase (190 aa).

Position 18 (tyrosine 18) interacts with tRNA. The active-site Proton acceptor is histidine 23. TRNA is bound by residues phenylalanine 67, asparagine 69, and asparagine 115.

It belongs to the PTH family. Monomer.

Its subcellular location is the cytoplasm. The catalysed reaction is an N-acyl-L-alpha-aminoacyl-tRNA + H2O = an N-acyl-L-amino acid + a tRNA + H(+). Its function is as follows. Hydrolyzes ribosome-free peptidyl-tRNAs (with 1 or more amino acids incorporated), which drop off the ribosome during protein synthesis, or as a result of ribosome stalling. Catalyzes the release of premature peptidyl moieties from peptidyl-tRNA molecules trapped in stalled 50S ribosomal subunits, and thus maintains levels of free tRNAs and 50S ribosomes. The polypeptide is Peptidyl-tRNA hydrolase (Leptospira interrogans serogroup Icterohaemorrhagiae serovar Lai (strain 56601)).